The following is a 32-amino-acid chain: Cytochrome c3, 10 kDa (32 aa).

The heme site is built by His-16, Cys-25, Cys-28, and His-29.

As to quaternary structure, monomer. In terms of processing, binds 1 heme group per subunit.

The protein localises to the periplasm. In terms of biological role, participates in sulfate respiration coupled with phosphorylation by transferring electrons from the enzyme dehydrogenase to ferredoxin. The protein is Cytochrome c3, 10 kDa of Desulfuromonas acetoxidans (Chloropseudomonas ethylica).